Here is a 245-residue protein sequence, read N- to C-terminus: Orotidine 5'-phosphate decarboxylase (245 aa).

Substrate contacts are provided by residues aspartate 22, lysine 44, 71-80 (DLKFHDIPNT), threonine 131, arginine 192, glutamine 201, glycine 221, and arginine 222. Lysine 73 functions as the Proton donor in the catalytic mechanism.

This sequence belongs to the OMP decarboxylase family. Type 1 subfamily. Homodimer.

The enzyme catalyses orotidine 5'-phosphate + H(+) = UMP + CO2. Its pathway is pyrimidine metabolism; UMP biosynthesis via de novo pathway; UMP from orotate: step 2/2. In terms of biological role, catalyzes the decarboxylation of orotidine 5'-monophosphate (OMP) to uridine 5'-monophosphate (UMP). The polypeptide is Orotidine 5'-phosphate decarboxylase (Escherichia coli O139:H28 (strain E24377A / ETEC)).